A 157-amino-acid chain; its full sequence is uncharacterized protein (157 aa).

The 102-residue stretch at Asn-33–Leu-134 folds into the HD domain.

This is an uncharacterized protein from Clostridium beijerinckii (strain ATCC 51743 / NCIMB 8052) (Clostridium acetobutylicum).